A 110-amino-acid polypeptide reads, in one-letter code: Large ribosomal subunit protein uL22 (110 aa).

Belongs to the universal ribosomal protein uL22 family. Part of the 50S ribosomal subunit.

Functionally, this protein binds specifically to 23S rRNA; its binding is stimulated by other ribosomal proteins, e.g. L4, L17, and L20. It is important during the early stages of 50S assembly. It makes multiple contacts with different domains of the 23S rRNA in the assembled 50S subunit and ribosome. Its function is as follows. The globular domain of the protein is located near the polypeptide exit tunnel on the outside of the subunit, while an extended beta-hairpin is found that lines the wall of the exit tunnel in the center of the 70S ribosome. This is Large ribosomal subunit protein uL22 from Marinomonas sp. (strain MWYL1).